A 161-amino-acid polypeptide reads, in one-letter code: Eukaryotic translation initiation factor 5A-2 (161 aa).

K54 is modified (hypusine).

This sequence belongs to the eIF-5A family. In terms of processing, lys-54 undergoes hypusination, a unique post-translational modification that consists in the addition of a butylamino group from spermidine to lysine side chain and leads to the formation of a hypusine residue. eIF-5As are the only known proteins to undergo this modification, which is essential for their function. Expressed in the somatic tissues.

Its subcellular location is the cytoplasm. Functionally, translation factor that promotes translation elongation and termination, particularly upon ribosome stalling at specific amino acid sequence contexts. Binds between the exit (E) and peptidyl (P) site of the ribosome and promotes rescue of stalled ribosome: specifically required for efficient translation of polyproline-containing peptides as well as other motifs that stall the ribosome. Acts as a ribosome quality control (RQC) cofactor by joining the RQC complex to facilitate peptidyl transfer during CAT tailing step. Acts in somatic tissues and its function in the soma is essential for normal growth and reproduction. The polypeptide is Eukaryotic translation initiation factor 5A-2 (iff-2) (Caenorhabditis elegans).